A 122-amino-acid chain; its full sequence is UPF0145 protein TV0671 (122 aa).

It belongs to the UPF0145 family.

This chain is UPF0145 protein TV0671, found in Thermoplasma volcanium (strain ATCC 51530 / DSM 4299 / JCM 9571 / NBRC 15438 / GSS1).